Consider the following 86-residue polypeptide: Small ribosomal subunit protein bS16 (86 aa).

The protein belongs to the bacterial ribosomal protein bS16 family.

This Syntrophotalea carbinolica (strain DSM 2380 / NBRC 103641 / GraBd1) (Pelobacter carbinolicus) protein is Small ribosomal subunit protein bS16.